A 355-amino-acid chain; its full sequence is Probable butyrate kinase (355 aa).

It belongs to the acetokinase family.

The protein resides in the cytoplasm. It carries out the reaction butanoate + ATP = butanoyl phosphate + ADP. In Listeria welshimeri serovar 6b (strain ATCC 35897 / DSM 20650 / CCUG 15529 / CIP 8149 / NCTC 11857 / SLCC 5334 / V8), this protein is Probable butyrate kinase.